We begin with the raw amino-acid sequence, 296 residues long: Elongation factor Ts (296 aa).

Residues 81-84 are involved in Mg(2+) ion dislocation from EF-Tu; it reads TDFV.

The protein belongs to the EF-Ts family.

It is found in the cytoplasm. Associates with the EF-Tu.GDP complex and induces the exchange of GDP to GTP. It remains bound to the aminoacyl-tRNA.EF-Tu.GTP complex up to the GTP hydrolysis stage on the ribosome. The chain is Elongation factor Ts from Ruthia magnifica subsp. Calyptogena magnifica.